A 297-amino-acid chain; its full sequence is 4,5-DOPA dioxygenase extradiol-like protein (297 aa).

Positions 30, 82, 205, and 263 each coordinate Zn(2+).

Belongs to the DODA-type extradiol aromatic ring-opening dioxygenase family. Zn(2+) serves as cofactor.

It localises to the cytoplasm. It is found in the nucleus. May be involved in the metabolism of aromatic compounds. This is 4,5-DOPA dioxygenase extradiol-like protein from Schizosaccharomyces pombe (strain 972 / ATCC 24843) (Fission yeast).